Consider the following 168-residue polypeptide: Lipoprotein signal peptidase (168 aa).

2 helical membrane-spanning segments follow: residues 57–77 (PKEV…LYVF) and 86–106 (FILP…DRIT). Catalysis depends on residues Asp112 and Asp138. The helical transmembrane segment at 131–151 (WPIFNIADSAITIGACLLILF) threads the bilayer.

Belongs to the peptidase A8 family.

It is found in the cell inner membrane. The catalysed reaction is Release of signal peptides from bacterial membrane prolipoproteins. Hydrolyzes -Xaa-Yaa-Zaa-|-(S,diacylglyceryl)Cys-, in which Xaa is hydrophobic (preferably Leu), and Yaa (Ala or Ser) and Zaa (Gly or Ala) have small, neutral side chains.. Its pathway is protein modification; lipoprotein biosynthesis (signal peptide cleavage). This protein specifically catalyzes the removal of signal peptides from prolipoproteins. This chain is Lipoprotein signal peptidase, found in Chlorobium phaeobacteroides (strain DSM 266 / SMG 266 / 2430).